The following is a 356-amino-acid chain: Tyrosine recombinase XerS (356 aa).

A Core-binding (CB) domain is found at 16-121 (VMPPYVLEYY…ALSSLYKYLT (106 aa)). Residues 169–354 (GFLDYIDSEY…INEEQKNALD (186 aa)) enclose the Tyr recombinase domain. Active-site residues include arginine 210, lysine 234, histidine 306, arginine 309, and histidine 332. Tyrosine 341 serves as the catalytic O-(3'-phospho-DNA)-tyrosine intermediate.

Belongs to the 'phage' integrase family. XerS subfamily.

The protein localises to the cytoplasm. Its activity is regulated as follows. FtsK is required for recombination. Functionally, site-specific tyrosine recombinase, which acts by catalyzing the cutting and rejoining of the recombining DNA molecules. Essential to convert dimers of the bacterial chromosome into monomers to permit their segregation at cell division. Binds an atypical recombination dif site (difSL). Binds preferentially to the left arm and cooperatively to the right arm of difSL. In Lactococcus lactis subsp. cremoris (strain MG1363), this protein is Tyrosine recombinase XerS.